A 477-amino-acid chain; its full sequence is Bifunctional protein HldE (477 aa).

The tract at residues 1 to 319 is ribokinase; it reads MTPPLPGFRD…AALGGGPAPA (319 aa). Residue 195-198 coordinates ATP; that stretch reads NLAE. Asp264 is an active-site residue. A cytidylyltransferase region spans residues 346–477; it reads MTNGCFDLLH…DLIARIRSRG (132 aa).

This sequence in the N-terminal section; belongs to the carbohydrate kinase PfkB family. The protein in the C-terminal section; belongs to the cytidylyltransferase family. In terms of assembly, homodimer.

The enzyme catalyses D-glycero-beta-D-manno-heptose 7-phosphate + ATP = D-glycero-beta-D-manno-heptose 1,7-bisphosphate + ADP + H(+). The catalysed reaction is D-glycero-beta-D-manno-heptose 1-phosphate + ATP + H(+) = ADP-D-glycero-beta-D-manno-heptose + diphosphate. It participates in nucleotide-sugar biosynthesis; ADP-L-glycero-beta-D-manno-heptose biosynthesis; ADP-L-glycero-beta-D-manno-heptose from D-glycero-beta-D-manno-heptose 7-phosphate: step 1/4. The protein operates within nucleotide-sugar biosynthesis; ADP-L-glycero-beta-D-manno-heptose biosynthesis; ADP-L-glycero-beta-D-manno-heptose from D-glycero-beta-D-manno-heptose 7-phosphate: step 3/4. Functionally, catalyzes the phosphorylation of D-glycero-D-manno-heptose 7-phosphate at the C-1 position to selectively form D-glycero-beta-D-manno-heptose-1,7-bisphosphate. In terms of biological role, catalyzes the ADP transfer from ATP to D-glycero-beta-D-manno-heptose 1-phosphate, yielding ADP-D-glycero-beta-D-manno-heptose. The sequence is that of Bifunctional protein HldE from Halorhodospira halophila (strain DSM 244 / SL1) (Ectothiorhodospira halophila (strain DSM 244 / SL1)).